The primary structure comprises 916 residues: Protein O-GlcNAcase (916 aa).

Residues 1 to 46 (MVQKESQAALEERESERNANPAAASGASLEQSVAPAPGEDNPSGAG) are disordered. One can recognise a GH84 domain in the interval 60–336 (FLCGVVEGFY…TLATWYKSNM (277 aa)). Glycine 67, lysine 98, and aspartate 174 together coordinate a protein. The active-site Proton donor is the aspartate 175. A protein contacts are provided by residues tyrosine 219, 278–280 (WDN), aspartate 285, and asparagine 313. A Phosphoserine modification is found at serine 364. The interval 443 to 465 (ALSGEPSVLTKEEEKKQPDEEPM) is disordered. The span at 452–461 (TKEEEKKQPD) shows a compositional bias: basic and acidic residues.

This sequence belongs to the glycosyl hydrolase 84 family. As to quaternary structure, monomer. Interacts with CLOCK. In terms of processing, proteolytically cleaved by caspase-3 during apoptosis. The fragments interact with each other; cleavage does not decrease enzyme activity.

It is found in the cytoplasm. The protein resides in the nucleus. It carries out the reaction 3-O-(N-acetyl-beta-D-glucosaminyl)-L-seryl-[protein] + H2O = N-acetyl-D-glucosamine + L-seryl-[protein]. The enzyme catalyses 3-O-(N-acetyl-beta-D-glucosaminyl)-L-threonyl-[protein] + H2O = L-threonyl-[protein] + N-acetyl-D-glucosamine. Its function is as follows. Cleaves GlcNAc but not GalNAc from O-glycosylated proteins. Deglycosylates a large and diverse number of proteins, such as CRYAB, ELK1, GSDMD, LMNB1 and TAB1. Can use p-nitrophenyl-beta-GlcNAc and 4-methylumbelliferone-GlcNAc as substrates but not p-nitrophenyl-beta-GalNAc or p-nitrophenyl-alpha-GlcNAc (in vitro). Does not bind acetyl-CoA and does not have histone acetyltransferase activity. This chain is Protein O-GlcNAcase, found in Mus musculus (Mouse).